Consider the following 1374-residue polypeptide: DNA-directed RNA polymerase subunit beta (1374 aa).

The protein belongs to the RNA polymerase beta chain family. As to quaternary structure, the RNAP catalytic core consists of 2 alpha, 1 beta, 1 beta' and 1 omega subunit. When a sigma factor is associated with the core the holoenzyme is formed, which can initiate transcription.

The catalysed reaction is RNA(n) + a ribonucleoside 5'-triphosphate = RNA(n+1) + diphosphate. Its function is as follows. DNA-dependent RNA polymerase catalyzes the transcription of DNA into RNA using the four ribonucleoside triphosphates as substrates. The protein is DNA-directed RNA polymerase subunit beta of Methylobacterium nodulans (strain LMG 21967 / CNCM I-2342 / ORS 2060).